The sequence spans 471 residues: Ribosomal protein uS12 methylthiotransferase RimO (471 aa).

An MTTase N-terminal domain is found at 23-138 (PKIGFVSLGC…VMDAVHVHVP (116 aa)). [4Fe-4S] cluster is bound by residues Cys32, Cys68, Cys97, Cys169, Cys173, and Cys176. The region spanning 155–396 (LTPRHYAYLK…MAVAEAVSAE (242 aa)) is the Radical SAM core domain. A TRAM domain is found at 399 to 471 (RERVGAEMQV…QGHDLVGQPL (73 aa)).

This sequence belongs to the methylthiotransferase family. RimO subfamily. [4Fe-4S] cluster serves as cofactor.

It localises to the cytoplasm. It catalyses the reaction L-aspartate(89)-[ribosomal protein uS12]-hydrogen + (sulfur carrier)-SH + AH2 + 2 S-adenosyl-L-methionine = 3-methylsulfanyl-L-aspartate(89)-[ribosomal protein uS12]-hydrogen + (sulfur carrier)-H + 5'-deoxyadenosine + L-methionine + A + S-adenosyl-L-homocysteine + 2 H(+). Catalyzes the methylthiolation of an aspartic acid residue of ribosomal protein uS12. In Methylibium petroleiphilum (strain ATCC BAA-1232 / LMG 22953 / PM1), this protein is Ribosomal protein uS12 methylthiotransferase RimO.